The chain runs to 105 residues: Pyrimidine/purine nucleoside phosphorylase (105 aa).

The protein belongs to the nucleoside phosphorylase PpnP family.

It carries out the reaction a purine D-ribonucleoside + phosphate = a purine nucleobase + alpha-D-ribose 1-phosphate. The enzyme catalyses adenosine + phosphate = alpha-D-ribose 1-phosphate + adenine. It catalyses the reaction cytidine + phosphate = cytosine + alpha-D-ribose 1-phosphate. The catalysed reaction is guanosine + phosphate = alpha-D-ribose 1-phosphate + guanine. It carries out the reaction inosine + phosphate = alpha-D-ribose 1-phosphate + hypoxanthine. The enzyme catalyses thymidine + phosphate = 2-deoxy-alpha-D-ribose 1-phosphate + thymine. It catalyses the reaction uridine + phosphate = alpha-D-ribose 1-phosphate + uracil. The catalysed reaction is xanthosine + phosphate = alpha-D-ribose 1-phosphate + xanthine. Catalyzes the phosphorolysis of diverse nucleosides, yielding D-ribose 1-phosphate and the respective free bases. Can use uridine, adenosine, guanosine, cytidine, thymidine, inosine and xanthosine as substrates. Also catalyzes the reverse reactions. The sequence is that of Pyrimidine/purine nucleoside phosphorylase from Delftia acidovorans (strain DSM 14801 / SPH-1).